The chain runs to 281 residues: Src-like-adapter (281 aa).

The disordered stretch occupies residues 1 to 20; sequence MGNSMKSTSPPSERPLSSSE. Gly2 carries the N-myristoyl glycine lipid modification. Residues 7 to 20 show a composition bias toward low complexity; sequence STSPPSERPLSSSE. An SH3 domain is found at 22-82; sequence LESDFLAVLT…PGICVARVYH (61 aa). The region spanning 84 to 175 is the SH2 domain; the sequence is WLFEGLGRDK…GLCCVLTTPC (92 aa). Residues 190–281 form an SLA C-terminal region; sequence CTSPGSPVTL…FFSAPQYFED (92 aa). Ser258 carries the post-translational modification Phosphoserine. Tyr278 is modified (phosphotyrosine).

As to quaternary structure, homodimer. Interacts with phosphorylated CBL, SYK and LAT. Homodimerization and interaction with phosphorylated CBL occurs via its C-terminal domain. Interacts with PDGFRB and EPHA2. Interacts with phosphorylated proteins ZAP70; CD3Z; VAV1 and LCP2 via its SH2 domain. Predominantly expressed in lymphoid tissues. Highly expressed in spleen, thymus and lymph nodes. Weakly expressed in lung and brain. Expressed in T-cells and at low level in B-cells.

The protein resides in the cytoplasm. It is found in the endosome. Adapter protein, which negatively regulates T-cell receptor (TCR) signaling. Inhibits T-cell antigen-receptor induced activation of nuclear factor of activated T-cells. Involved in the negative regulation of positive selection and mitosis of T-cells. May act by linking signaling proteins such as ZAP70 with CBL, leading to a CBL dependent degradation of signaling proteins. This is Src-like-adapter (Sla) from Mus musculus (Mouse).